The chain runs to 661 residues: Peroxisomal acyl-coenzyme A oxidase 1 (661 aa).

S26 carries the phosphoserine modification. K65 is subject to N6-acetyllysine. K89 is modified (N6-succinyllysine). FAD is bound at residue T139. K159 bears the N6-succinyllysine mark. G178 serves as a coordination point for FAD. K216 is subject to N6-acetyllysine. At K241 the chain carries N6-succinyllysine. An N6-acetyllysine mark is found at K255, K267, and K272. At K349 the chain carries N6-succinyllysine. Residue E421 is the Proton acceptor of the active site. An N6-acetyllysine; alternate mark is found at K437 and K446. An N6-succinyllysine; alternate mark is found at K437 and K446. At K500 the chain carries N6-acetyllysine. At K512 the chain carries N6-acetyllysine; alternate. K512 is modified (N6-succinyllysine; alternate). Residue K542 is modified to N6-succinyllysine. K637 is modified (N6-acetyllysine; alternate). At K637 the chain carries N6-succinyllysine; alternate. K643 is modified (N6-succinyllysine). S649 is subject to Phosphoserine. N6-acetyllysine is present on K652. N6-succinyllysine is present on K655. The Microbody targeting signal motif lies at 659-661; it reads SKL.

The protein belongs to the acyl-CoA oxidase family. In terms of assembly, homodimer. Interacts with LONP2. Requires FAD as cofactor.

The protein resides in the peroxisome. It carries out the reaction a 2,3-saturated acyl-CoA + O2 = a (2E)-enoyl-CoA + H2O2. The catalysed reaction is hexadecanoyl-CoA + O2 = (2E)-hexadecenoyl-CoA + H2O2. It catalyses the reaction dodecanoyl-CoA + O2 = (2E)-dodecenoyl-CoA + H2O2. The enzyme catalyses octanoyl-CoA + O2 = (2E)-octenoyl-CoA + H2O2. It carries out the reaction decanoyl-CoA + O2 = (2E)-decenoyl-CoA + H2O2. The catalysed reaction is tetradecanoyl-CoA + O2 = (2E)-tetradecenoyl-CoA + H2O2. It catalyses the reaction hexadecanedioyl-CoA + O2 = (2E)-hexadecenedioyl-CoA + H2O2. The enzyme catalyses tetracosanoyl-CoA + O2 = (2E)-tetracosenoyl-CoA + H2O2. It carries out the reaction glutaryl-CoA + O2 = (2E)-glutaconyl-CoA + H2O2. The catalysed reaction is hexanoyl-CoA + O2 = (2E)-hexenoyl-CoA + H2O2. It catalyses the reaction octadecanoyl-CoA + O2 = (2E)-octadecenoyl-CoA + H2O2. The enzyme catalyses (5Z,8Z,11Z,14Z,17Z)-eicosapentaenoyl-CoA + O2 = (2E,5Z,8Z,11Z,14Z,17Z)-icosahexaenoyl-CoA + H2O2. It carries out the reaction (6Z,9Z,12Z,15Z,18Z,21Z)-tetracosahexaenoyl-CoA + O2 = (2E,6Z,9Z,12Z,15Z,18Z,21Z)-tetracosaheptaenoyl-CoA + H2O2. The protein operates within lipid metabolism; peroxisomal fatty acid beta-oxidation. Its function is as follows. Involved in the initial and rate-limiting step of peroxisomal beta-oxidation of straight-chain saturated and unsaturated very-long-chain fatty acids. Catalyzes the desaturation of fatty acyl-CoAs such as palmitoyl-CoA (hexadecanoyl-CoA) to 2-trans-enoyl-CoAs ((2E)-enoyl-CoAs) such as (2E)-hexadecenoyl-CoA, and donates electrons directly to molecular oxygen (O(2)), thereby producing hydrogen peroxide (H(2)O(2)). This is Peroxisomal acyl-coenzyme A oxidase 1 from Cavia porcellus (Guinea pig).